The chain runs to 365 residues: Holliday junction branch migration complex subunit RuvB (365 aa).

The large ATPase domain (RuvB-L) stretch occupies residues 1-191 (MNFDPIDDFD…FGFTAHMDFY (191 aa)). ATP is bound by residues Leu30, Arg31, Gly72, Lys75, Thr76, Ser77, 138–140 (EDF), Arg181, Tyr191, and Arg228. Thr76 lines the Mg(2+) pocket. The interval 192 to 262 (EPEELQQILM…VAQAALAVYD (71 aa)) is small ATPAse domain (RuvB-S). The interval 265-365 (QLGLDRLDRS…QATLFDPNGE (101 aa)) is head domain (RuvB-H). DNA contacts are provided by Arg320 and Arg325.

Belongs to the RuvB family. Homohexamer. Forms an RuvA(8)-RuvB(12)-Holliday junction (HJ) complex. HJ DNA is sandwiched between 2 RuvA tetramers; dsDNA enters through RuvA and exits via RuvB. An RuvB hexamer assembles on each DNA strand where it exits the tetramer. Each RuvB hexamer is contacted by two RuvA subunits (via domain III) on 2 adjacent RuvB subunits; this complex drives branch migration. In the full resolvosome a probable DNA-RuvA(4)-RuvB(12)-RuvC(2) complex forms which resolves the HJ.

It localises to the cytoplasm. It catalyses the reaction ATP + H2O = ADP + phosphate + H(+). Functionally, the RuvA-RuvB-RuvC complex processes Holliday junction (HJ) DNA during genetic recombination and DNA repair, while the RuvA-RuvB complex plays an important role in the rescue of blocked DNA replication forks via replication fork reversal (RFR). RuvA specifically binds to HJ cruciform DNA, conferring on it an open structure. The RuvB hexamer acts as an ATP-dependent pump, pulling dsDNA into and through the RuvAB complex. RuvB forms 2 homohexamers on either side of HJ DNA bound by 1 or 2 RuvA tetramers; 4 subunits per hexamer contact DNA at a time. Coordinated motions by a converter formed by DNA-disengaged RuvB subunits stimulates ATP hydrolysis and nucleotide exchange. Immobilization of the converter enables RuvB to convert the ATP-contained energy into a lever motion, pulling 2 nucleotides of DNA out of the RuvA tetramer per ATP hydrolyzed, thus driving DNA branch migration. The RuvB motors rotate together with the DNA substrate, which together with the progressing nucleotide cycle form the mechanistic basis for DNA recombination by continuous HJ branch migration. Branch migration allows RuvC to scan DNA until it finds its consensus sequence, where it cleaves and resolves cruciform DNA. The sequence is that of Holliday junction branch migration complex subunit RuvB from Rhodococcus erythropolis (strain PR4 / NBRC 100887).